A 320-amino-acid chain; its full sequence is tRNA-cytidine(32) 2-sulfurtransferase (320 aa).

Residues 54–59 (SGGKDS) carry the PP-loop motif motif. Positions 129, 132, and 220 each coordinate [4Fe-4S] cluster.

This sequence belongs to the TtcA family. Homodimer. Requires Mg(2+) as cofactor. [4Fe-4S] cluster is required as a cofactor.

It is found in the cytoplasm. The enzyme catalyses cytidine(32) in tRNA + S-sulfanyl-L-cysteinyl-[cysteine desulfurase] + AH2 + ATP = 2-thiocytidine(32) in tRNA + L-cysteinyl-[cysteine desulfurase] + A + AMP + diphosphate + H(+). Its pathway is tRNA modification. In terms of biological role, catalyzes the ATP-dependent 2-thiolation of cytidine in position 32 of tRNA, to form 2-thiocytidine (s(2)C32). The sulfur atoms are provided by the cysteine/cysteine desulfurase (IscS) system. This is tRNA-cytidine(32) 2-sulfurtransferase from Bordetella parapertussis (strain 12822 / ATCC BAA-587 / NCTC 13253).